Consider the following 288-residue polypeptide: Light-independent protochlorophyllide reductase iron-sulfur ATP-binding protein (288 aa).

Residues 10-15 (GIGKST) and K39 each bind ATP. S14 is a Mg(2+) binding site. [4Fe-4S] cluster contacts are provided by C95 and C129. Residue 180–181 (NR) coordinates ATP.

The protein belongs to the NifH/BchL/ChlL family. In terms of assembly, homodimer. Protochlorophyllide reductase is composed of three subunits; ChlL, ChlN and ChlB. [4Fe-4S] cluster serves as cofactor.

The catalysed reaction is chlorophyllide a + oxidized 2[4Fe-4S]-[ferredoxin] + 2 ADP + 2 phosphate = protochlorophyllide a + reduced 2[4Fe-4S]-[ferredoxin] + 2 ATP + 2 H2O. The protein operates within porphyrin-containing compound metabolism; chlorophyll biosynthesis (light-independent). In terms of biological role, component of the dark-operative protochlorophyllide reductase (DPOR) that uses Mg-ATP and reduced ferredoxin to reduce ring D of protochlorophyllide (Pchlide) to form chlorophyllide a (Chlide). This reaction is light-independent. The L component serves as a unique electron donor to the NB-component of the complex, and binds Mg-ATP. This is Light-independent protochlorophyllide reductase iron-sulfur ATP-binding protein from Trichodesmium erythraeum (strain IMS101).